The following is an 811-amino-acid chain: Zinc finger protein 839 (811 aa).

The C2H2-type zinc finger occupies 197-222; that stretch reads FKCQTCEKSYIGKGGLARHFKLNPGH. Disordered regions lie at residues 329 to 349, 455 to 555, and 612 to 654; these read QRRA…RASP, PDNL…NGSV, and ALEH…AEAG. The span at 476-485 shows a compositional bias: basic and acidic residues; the sequence is SSEKREREAA. A compositionally biased stretch (polar residues) spans 501–510; it reads SNDTTESLAA.

This chain is Zinc finger protein 839 (ZNF839), found in Homo sapiens (Human).